Reading from the N-terminus, the 224-residue chain is dTTP/UTP pyrophosphatase (224 aa).

The Proton acceptor role is filled by Asp77.

Belongs to the Maf family. YhdE subfamily. A divalent metal cation is required as a cofactor.

Its subcellular location is the cytoplasm. It carries out the reaction dTTP + H2O = dTMP + diphosphate + H(+). The enzyme catalyses UTP + H2O = UMP + diphosphate + H(+). Nucleoside triphosphate pyrophosphatase that hydrolyzes dTTP and UTP. May have a dual role in cell division arrest and in preventing the incorporation of modified nucleotides into cellular nucleic acids. The polypeptide is dTTP/UTP pyrophosphatase (Dehalococcoides mccartyi (strain ATCC BAA-2266 / KCTC 15142 / 195) (Dehalococcoides ethenogenes (strain 195))).